Consider the following 286-residue polypeptide: Transcription factor bHLH11 (286 aa).

The segment at 1-34 is disordered; that stretch reads MDQPMKPKTCSESDFADDSSASSSSSSGQNLRGA. The segment covering 18-27 has biased composition (low complexity); sequence DSSASSSSSS. The bHLH domain maps to 44–94; it reads AVCSQKAEREKLRRDKLKEQFLELGNALDPNRPKSDKASVLTDTIQMLKDV. Disordered stretches follow at residues 182 to 202 and 244 to 286; these read EQQASVQQHSSSSADASMKQD and QQDV…MLKP. 2 stretches are compositionally biased toward low complexity: residues 183-198 and 255-269; these read QQASVQQHSSSSADAS and SLTTTASSSNSYSLS. Residues 270–279 show a composition bias toward polar residues; that stretch reads QAVQDSSPGT.

In terms of assembly, homodimer. As to expression, expressed consitutively in roots, leaves, stems, and flowers.

It is found in the nucleus. The protein is Transcription factor bHLH11 (BHLH11) of Arabidopsis thaliana (Mouse-ear cress).